The sequence spans 273 residues: Pantothenate synthetase (273 aa).

27 to 34 lines the ATP pocket; that stretch reads MGALHDGH. H34 acts as the Proton donor in catalysis. A (R)-pantoate-binding site is contributed by Q58. Q58 contributes to the beta-alanine binding site. 144 to 147 provides a ligand contact to ATP; that stretch reads GKKD. Q150 is a (R)-pantoate binding site. ATP is bound by residues V173 and 181–184; that span reads LSSR.

The protein belongs to the pantothenate synthetase family. As to quaternary structure, homodimer.

It localises to the cytoplasm. It carries out the reaction (R)-pantoate + beta-alanine + ATP = (R)-pantothenate + AMP + diphosphate + H(+). The protein operates within cofactor biosynthesis; (R)-pantothenate biosynthesis; (R)-pantothenate from (R)-pantoate and beta-alanine: step 1/1. Functionally, catalyzes the condensation of pantoate with beta-alanine in an ATP-dependent reaction via a pantoyl-adenylate intermediate. The chain is Pantothenate synthetase from Campylobacter concisus (strain 13826).